Reading from the N-terminus, the 565-residue chain is Tyrosine-protein phosphatase non-receptor type 5 (565 aa).

A compositionally biased stretch (basic and acidic residues) spans 1–16; sequence MNYEGARSERENHAAD. Positions 1–80 are disordered; it reads MNYEGARSER…KPPPRGAGSH (80 aa). Pro residues predominate over residues 56–75; that stretch reads MPPPPPPSPPSDPAQKPPPR. A run of 2 helical transmembrane segments spans residues 88–108 and 146–166; these read LCLFAASQFLLACGVLWFSGY and LLLVFLSVGLVLVTTLVWHLL. A disordered region spans residues 169-189; that stretch reads PPEPPTPLPPEDRRQSVSRQP. Ser-245 carries the post-translational modification Phosphoserine; by PKA. Position 255 is a phosphothreonine; by MAPK (Thr-255). Residue Ser-268 is modified to Phosphoserine; by MAPK. The region spanning 300 to 555 is the Tyrosine-protein phosphatase domain; it reads LQAEFFEIPM…QFVHHVMSLY (256 aa). Residues Asp-461, 496–502, and Gln-540 each bind substrate; that span reads CSAGIGR. Cys-496 functions as the Phosphocysteine intermediate in the catalytic mechanism.

It belongs to the protein-tyrosine phosphatase family. Non-receptor class subfamily. In terms of processing, phosphorylation at Ser-245 by PKA deactivates PTPN5. Phosphorylation at Thr-255 and Ser-268 by MAPKs stabilizes the phosphatase, dephosphorylation of these sites results in ubiquitin-mediated degradation of the active phosphatase.

It is found in the endoplasmic reticulum membrane. It catalyses the reaction O-phospho-L-tyrosyl-[protein] + H2O = L-tyrosyl-[protein] + phosphate. May regulate the activity of several effector molecules involved in synaptic plasticity and neuronal cell survival, including MAPKs, Src family kinases and NMDA receptors. This chain is Tyrosine-protein phosphatase non-receptor type 5 (PTPN5), found in Homo sapiens (Human).